Consider the following 701-residue polypeptide: Reverse gyrase subunit A (701 aa).

In terms of domain architecture, Toprim spans 41–197; that stretch reads MVLFIVESPN…NIYRAEFHEV (157 aa). Glu-47 is a binding site for Mg(2+). The segment at 117–143 adopts an RG C-terminal-type zinc-finger fold; sequence IKKCLDCGHQFVDEDKCPRCGSENIDD. 4 residues coordinate Zn(2+): Cys-120, Cys-123, Cys-133, and Cys-136. Asp-166 is a binding site for Mg(2+). The Topo IA-type catalytic domain occupies 213 to 602; sequence NTNRVKAQLV…SFKKELIEIW (390 aa). Tyr-352 functions as the O-(5'-phospho-DNA)-tyrosine intermediate in the catalytic mechanism.

This sequence belongs to the type IA topoisomerase family. Heterodimer of an RgyA and RgyB subunit. Zn(2+) is required as a cofactor. It depends on Mg(2+) as a cofactor.

The protein resides in the cytoplasm. Modifies the topological state of DNA by introducing positive supercoils in an ATP-dependent process. Binds to single-stranded DNA, transiently cleaves and then rejoins the end, introducing a positive supercoil in the process. The scissile phosphodiester is attacked by the catalytic tyrosine of the enzyme, resulting in the formation of a DNA-(5'-phosphotyrosyl)-enzyme intermediate. Probably involved in rewinding DNA strands in regions of the chromosome that have opened up to allow replication, transcription, DNA repair or for DNA protection. Reconstituted holoenzyme binds dsDNA a bit better than ssDNA, this subunit preferentially binds ssDNA. In isolation this subunit relaxes negatively-supercoiled DNA, and stimulates the endogenous ATPase activity of the RgyB subunit. This chain is Reverse gyrase subunit A, found in Nanoarchaeum equitans (strain Kin4-M).